Reading from the N-terminus, the 307-residue chain is N-acetylmuramic acid 6-phosphate etherase (307 aa).

One can recognise an SIS domain in the interval 62–225; sequence IVLAFQKGAR…TTASMIRIGK (164 aa). Catalysis depends on E90, which acts as the Proton donor. Residue E121 is part of the active site.

This sequence belongs to the GCKR-like family. MurNAc-6-P etherase subfamily. In terms of assembly, homodimer.

The enzyme catalyses N-acetyl-D-muramate 6-phosphate + H2O = N-acetyl-D-glucosamine 6-phosphate + (R)-lactate. The protein operates within amino-sugar metabolism; 1,6-anhydro-N-acetylmuramate degradation. It functions in the pathway amino-sugar metabolism; N-acetylmuramate degradation. Its pathway is cell wall biogenesis; peptidoglycan recycling. Functionally, specifically catalyzes the cleavage of the D-lactyl ether substituent of MurNAc 6-phosphate, producing GlcNAc 6-phosphate and D-lactate. Together with AnmK, is also required for the utilization of anhydro-N-acetylmuramic acid (anhMurNAc) either imported from the medium or derived from its own cell wall murein, and thus plays a role in cell wall recycling. This chain is N-acetylmuramic acid 6-phosphate etherase, found in Mesorhizobium japonicum (strain LMG 29417 / CECT 9101 / MAFF 303099) (Mesorhizobium loti (strain MAFF 303099)).